Consider the following 136-residue polypeptide: MAPKAEKKPAAEKKPVETEKKPKAEKRVPGKDGGADKKKKKAKKSVETYKIYIFKVLKQVHPDIGISSKAMSIMNSFINDIFEKLAGESAKLARYNKKPTITSREIQTAVRLVLPGELAKHAVSEGTKAVTKFTSS.

Positions 1 to 36 (MAPKAEKKPAAEKKPVETEKKPKAEKRVPGKDGGAD) are enriched in basic and acidic residues. The interval 1–44 (MAPKAEKKPAAEKKPVETEKKPKAEKRVPGKDGGADKKKKKAKK) is disordered. Lys7 and Lys26 each carry N6-acetyllysine. Residue Lys132 forms a Glycyl lysine isopeptide (Lys-Gly) (interchain with G-Cter in ubiquitin) linkage.

This sequence belongs to the histone H2B family. The nucleosome is a histone octamer containing two molecules each of H2A, H2B, H3 and H4 assembled in one H3-H4 heterotetramer and two H2A-H2B heterodimers. The octamer wraps approximately 147 bp of DNA. Can be acetylated to form H2BK6ac and H2BK33ac. Post-translationally, monoubiquitinated to form H2BK143ub1; may give a specific tag for epigenetic transcriptional activation.

It localises to the nucleus. The protein localises to the chromosome. In terms of biological role, core component of nucleosome. Nucleosomes wrap and compact DNA into chromatin, limiting DNA accessibility to the cellular machineries which require DNA as a template. Histones thereby play a central role in transcription regulation, DNA repair, DNA replication and chromosomal stability. DNA accessibility is regulated via a complex set of post-translational modifications of histones, also called histone code, and nucleosome remodeling. This chain is Histone H2B.5, found in Triticum aestivum (Wheat).